The sequence spans 418 residues: 3-deoxy-D-manno-octulosonic acid transferase (418 aa).

A helical; Signal-anchor transmembrane segment spans residues 7-27; the sequence is FLSFLLLPIYFVIIFIRLLIG. The active-site Proton acceptor is the Glu60. CMP is bound by residues 264–265, 305–307, and 330–333; these read PR, FGE, and NILE.

It belongs to the glycosyltransferase group 1 family. Glycosyltransferase 30 subfamily.

Its subcellular location is the cell inner membrane. It carries out the reaction lipid IVA (E. coli) + CMP-3-deoxy-beta-D-manno-octulosonate = alpha-Kdo-(2-&gt;6)-lipid IVA (E. coli) + CMP + H(+). Its pathway is bacterial outer membrane biogenesis; LPS core biosynthesis. Functionally, involved in lipopolysaccharide (LPS) biosynthesis. Catalyzes the transfer of 3-deoxy-D-manno-octulosonate (Kdo) residue(s) from CMP-Kdo to lipid IV(A), the tetraacyldisaccharide-1,4'-bisphosphate precursor of lipid A. This Rickettsia bellii (strain RML369-C) protein is 3-deoxy-D-manno-octulosonic acid transferase (waaA).